The following is a 117-amino-acid chain: Putative cysteine proteinase inhibitor 7 (117 aa).

The N-terminal stretch at Met-1–Ala-24 is a signal peptide. Residues Gly-28 to Ala-84 enclose the Cystatin domain. The short motif at Gln-71 to Gly-75 is the Secondary area of contact element.

Belongs to the cystatin family. Phytocystatin subfamily.

The protein resides in the secreted. Its function is as follows. Specific inhibitor of cysteine proteinases. Probably involved in the regulation of endogenous processes and in defense against pests and pathogens. The sequence is that of Putative cysteine proteinase inhibitor 7 from Oryza sativa subsp. japonica (Rice).